A 185-amino-acid chain; its full sequence is Ribosome-recycling factor (185 aa).

It belongs to the RRF family.

It is found in the cytoplasm. Its function is as follows. Responsible for the release of ribosomes from messenger RNA at the termination of protein biosynthesis. May increase the efficiency of translation by recycling ribosomes from one round of translation to another. The polypeptide is Ribosome-recycling factor (Salinispora tropica (strain ATCC BAA-916 / DSM 44818 / JCM 13857 / NBRC 105044 / CNB-440)).